We begin with the raw amino-acid sequence, 574 residues long: Proline--tRNA ligase (574 aa).

This sequence belongs to the class-II aminoacyl-tRNA synthetase family. ProS type 1 subfamily. As to quaternary structure, homodimer.

It is found in the cytoplasm. It catalyses the reaction tRNA(Pro) + L-proline + ATP = L-prolyl-tRNA(Pro) + AMP + diphosphate. Its function is as follows. Catalyzes the attachment of proline to tRNA(Pro) in a two-step reaction: proline is first activated by ATP to form Pro-AMP and then transferred to the acceptor end of tRNA(Pro). As ProRS can inadvertently accommodate and process non-cognate amino acids such as alanine and cysteine, to avoid such errors it has two additional distinct editing activities against alanine. One activity is designated as 'pretransfer' editing and involves the tRNA(Pro)-independent hydrolysis of activated Ala-AMP. The other activity is designated 'posttransfer' editing and involves deacylation of mischarged Ala-tRNA(Pro). The misacylated Cys-tRNA(Pro) is not edited by ProRS. This is Proline--tRNA ligase from Ralstonia pickettii (strain 12J).